Reading from the N-terminus, the 190-residue chain is Small ribosomal subunit protein uS5 (190 aa).

Residues 22 to 85 (FVDKLVHINR…ESAKRNLTRV (64 aa)) enclose the S5 DRBM domain.

Belongs to the universal ribosomal protein uS5 family. As to quaternary structure, part of the 30S ribosomal subunit. Contacts proteins S4 and S8.

With S4 and S12 plays an important role in translational accuracy. Its function is as follows. Located at the back of the 30S subunit body where it stabilizes the conformation of the head with respect to the body. This Rhodopseudomonas palustris (strain BisB18) protein is Small ribosomal subunit protein uS5.